A 138-amino-acid chain; its full sequence is MINKTRHNARRYALQALYQWFFCETKPDALISQFMEEHDLSDTEVAYFKEVVTGTIQHVAIIDELMTAHLDRKISALNPVELSVLRLSIYELLHRKEVPYKVVIDEALELVKEFGAEAGHKYVNAILDVLSSEIRKGV.

It belongs to the NusB family.

Involved in transcription antitermination. Required for transcription of ribosomal RNA (rRNA) genes. Binds specifically to the boxA antiterminator sequence of the ribosomal RNA (rrn) operons. This Coxiella burnetii (strain CbuK_Q154) (Coxiella burnetii (strain Q154)) protein is Transcription antitermination protein NusB.